A 304-amino-acid chain; its full sequence is Protease HtpX homolog (304 aa).

Helical transmembrane passes span 14–34 (VFIV…IGII) and 39–59 (YLNG…IMVM). Position 144 (histidine 144) interacts with Zn(2+). Glutamate 145 is an active-site residue. Histidine 148 contributes to the Zn(2+) binding site. The next 2 membrane-spanning stretches (helical) occupy residues 161-181 (IALV…IFWG) and 202-222 (LIIY…ATAI). Residue glutamate 231 coordinates Zn(2+). Positions 276 to 295 (SPLKSKKDKPGIFDSHPPIS) are disordered.

Belongs to the peptidase M48B family. Requires Zn(2+) as cofactor.

Its subcellular location is the cell membrane. The sequence is that of Protease HtpX homolog from Listeria welshimeri serovar 6b (strain ATCC 35897 / DSM 20650 / CCUG 15529 / CIP 8149 / NCTC 11857 / SLCC 5334 / V8).